Here is a 103-residue protein sequence, read N- to C-terminus: Large ribosomal subunit protein uL24 (103 aa).

This sequence belongs to the universal ribosomal protein uL24 family. Part of the 50S ribosomal subunit.

In terms of biological role, one of two assembly initiator proteins, it binds directly to the 5'-end of the 23S rRNA, where it nucleates assembly of the 50S subunit. One of the proteins that surrounds the polypeptide exit tunnel on the outside of the subunit. The sequence is that of Large ribosomal subunit protein uL24 from Bacillus licheniformis (strain ATCC 14580 / DSM 13 / JCM 2505 / CCUG 7422 / NBRC 12200 / NCIMB 9375 / NCTC 10341 / NRRL NRS-1264 / Gibson 46).